A 378-amino-acid polypeptide reads, in one-letter code: Cobalt-precorrin-5B C(1)-methyltransferase (378 aa).

This sequence belongs to the CbiD family.

It catalyses the reaction Co-precorrin-5B + S-adenosyl-L-methionine = Co-precorrin-6A + S-adenosyl-L-homocysteine. The protein operates within cofactor biosynthesis; adenosylcobalamin biosynthesis; cob(II)yrinate a,c-diamide from sirohydrochlorin (anaerobic route): step 6/10. In terms of biological role, catalyzes the methylation of C-1 in cobalt-precorrin-5B to form cobalt-precorrin-6A. This Thermoplasma volcanium (strain ATCC 51530 / DSM 4299 / JCM 9571 / NBRC 15438 / GSS1) protein is Cobalt-precorrin-5B C(1)-methyltransferase.